Here is a 256-residue protein sequence, read N- to C-terminus: MKKVALVTGAGQGIGKAIALRLVKDGFAVAIADYNDATAKAVASEINQAGGRAMAVKVDVSDRDQVFAAVEQARKTLGGFDVIVNNAGVAPSTPIESITPEIVDKVYNINVKGVIWGIQAAVEAFKKEGHGGKIINACSQAGHVGNPELAVYSSSKFAVRGLTQTAARDLAPLGITVNGYCPGIVKTPMWAEIDRQVSEAAGKPLGYGTAEFAKRITLGRLSEPEDVAACVSYLASPDSDYMTGQSLLIDGGMVFN.

NAD(+) contacts are provided by residues 6 to 33 (LVTG…AIAD) and Asp-59. Ser-139 provides a ligand contact to substrate. Residue Tyr-152 is the Proton acceptor of the active site. Lys-156 serves as a coordination point for NAD(+).

This sequence belongs to the short-chain dehydrogenases/reductases (SDR) family. In terms of assembly, homotetramer.

The enzyme catalyses (S)-acetoin + NAD(+) = diacetyl + NADH + H(+). Catalyzes the reversible reduction of (S)-acetoin to 2,3-butanediol in the presence of NADH. This Klebsiella pneumoniae protein is Diacetyl reductase [(S)-acetoin forming] (budC).